A 535-amino-acid polypeptide reads, in one-letter code: MTDQTTRLPIRRALISVSDKTGILEFAKELEALGVEILSTGGTFKLLQDNGVSAVEVADYTGFAEMMDGRVKTLHPKIHGGILGRRGIDDAIMNEHGIKPIDLVAVNLYPFEATINKPGCDLPTAIENIDIGGPTMVRSAAKNHKDVAIVVNASDYAGVLESLKAGGLTYAQRFDLMLKAFEHTAAYDGMIANYMGTVNQAAETLSTSGRSEFPRTFNSQFIKAQEMRYGENPHQSAAFYVEAKPAEVGIATATQLQGKELSYNNVADTDAALECVKSFVKPACVIVKHANPCGVAVSPDAEGGIRQAYELAYATDTESAFGGIIAFNRELDAATAKAIVERQFVEVIIAPSVSEEARAIVAAKANVRLLACGQWSAERAAAWDYKRVNGGLLVQSRDIGMISADDLKVVTKRAPTEQEINDLIFAWKVAKYVKSNAIVYAKNRQTIGVGAGQMSRVNSARIAAIKAEHAGLQVAGSVMASDAFFPFRDGLDNAAKVGITAVIQPGGSMRDNEVIAAADEAGIAMVFTGMRHFRH.

An MGS-like domain is found at 6-151 (TRLPIRRALI…KNHKDVAIVV (146 aa)).

Belongs to the PurH family.

The enzyme catalyses (6R)-10-formyltetrahydrofolate + 5-amino-1-(5-phospho-beta-D-ribosyl)imidazole-4-carboxamide = 5-formamido-1-(5-phospho-D-ribosyl)imidazole-4-carboxamide + (6S)-5,6,7,8-tetrahydrofolate. It catalyses the reaction IMP + H2O = 5-formamido-1-(5-phospho-D-ribosyl)imidazole-4-carboxamide. It participates in purine metabolism; IMP biosynthesis via de novo pathway; 5-formamido-1-(5-phospho-D-ribosyl)imidazole-4-carboxamide from 5-amino-1-(5-phospho-D-ribosyl)imidazole-4-carboxamide (10-formyl THF route): step 1/1. The protein operates within purine metabolism; IMP biosynthesis via de novo pathway; IMP from 5-formamido-1-(5-phospho-D-ribosyl)imidazole-4-carboxamide: step 1/1. This chain is Bifunctional purine biosynthesis protein PurH, found in Pseudomonas fluorescens (strain ATCC BAA-477 / NRRL B-23932 / Pf-5).